We begin with the raw amino-acid sequence, 88 residues long: Small ribosomal subunit protein bS20 (88 aa).

The segment at 1–33 is disordered; sequence MANTSSAKKATRKIARRTAVNKSRRTQMRGSVR.

It belongs to the bacterial ribosomal protein bS20 family.

In terms of biological role, binds directly to 16S ribosomal RNA. The polypeptide is Small ribosomal subunit protein bS20 (Rhodopseudomonas palustris (strain BisB5)).